Reading from the N-terminus, the 188-residue chain is Trafficking protein particle complex subunit 5 (188 aa).

Position 10 is a phosphoserine (Ser10).

Belongs to the TRAPP small subunits family. BET3 subfamily. In terms of assembly, component of the multisubunit TRAPP (transport protein particle) complex, which includes at least TRAPPC2, TRAPPC2L, TRAPPC3, TRAPPC3L, TRAPPC4, TRAPPC5, TRAPPC8, TRAPPC9, TRAPPC10, TRAPPC11 and TRAPPC12.

It is found in the golgi apparatus. Its subcellular location is the cis-Golgi network. The protein localises to the endoplasmic reticulum. May play a role in vesicular transport from endoplasmic reticulum to Golgi. This is Trafficking protein particle complex subunit 5 (Trappc5) from Mus musculus (Mouse).